A 445-amino-acid chain; its full sequence is Phosphoglucosamine mutase (445 aa).

The active-site Phosphoserine intermediate is S102. Positions 102, 241, 243, and 245 each coordinate Mg(2+). S102 bears the Phosphoserine mark.

The protein belongs to the phosphohexose mutase family. Mg(2+) serves as cofactor. In terms of processing, activated by phosphorylation.

It carries out the reaction alpha-D-glucosamine 1-phosphate = D-glucosamine 6-phosphate. Its function is as follows. Catalyzes the conversion of glucosamine-6-phosphate to glucosamine-1-phosphate. This is Phosphoglucosamine mutase from Sodalis glossinidius (strain morsitans).